The primary structure comprises 117 residues: Immunoglobulin heavy variable 1-84 (117 aa).

The N-terminal stretch at 1-19 is a signal peptide; that stretch reads MGWSWIFLFLLSGTAGVHC. A framework-1 region spans residues 20-49; that stretch reads QIQLQQSGPELVKPGASVKISCKASGYTFT. Residues 31-117 enclose the Ig-like domain; sequence VKPGASVKIS…EDSAVYFCAR (87 aa). A disulfide bridge links cysteine 41 with cysteine 115. Positions 50 to 54 are complementarity-determining-1; it reads DYYIN. Residues 55-68 form a framework-2 region; the sequence is WVKQRPGQGLEWIG. The tract at residues 69–85 is complementarity-determining-2; sequence WIYPGSGNTKYNEKFKG. The framework-3 stretch occupies residues 86 to 117; sequence KATLTVDTSSSTAYMQLSSLTSEDSAVYFCAR.

This is Immunoglobulin heavy variable 1-84 from Mus musculus (Mouse).